The sequence spans 230 residues: MKGILGKKVGMSQLFTTEGIAIPVSIIEVPENIVTKIITKEKNSYDAIQLAAFDKKQSRFLKPEIGHFAKANTKPKRFIKEFRDFQGYKLGQTVDVSIFSPGEFVDVTGTSKGKGFAGTIKRYNQAIGPRSHGGGGGSKPIRQTGSLGDISGNKVVKGMTMPGRLGHEKVTKQSLEIIKVDKENNLLVLKGSVPGPKKSFLVIKSAIKKPNPKNPVSLFVPNSDKEVKNE.

Disordered regions lie at residues 125 to 149 (QAIG…SLGD) and 210 to 230 (PNPK…VKNE).

This sequence belongs to the universal ribosomal protein uL3 family. Part of the 50S ribosomal subunit. Forms a cluster with proteins L14 and L19.

Functionally, one of the primary rRNA binding proteins, it binds directly near the 3'-end of the 23S rRNA, where it nucleates assembly of the 50S subunit. The polypeptide is Large ribosomal subunit protein uL3 (Mesomycoplasma hyopneumoniae (strain J / ATCC 25934 / NCTC 10110) (Mycoplasma hyopneumoniae)).